The following is a 655-amino-acid chain: Tumor necrosis factor receptor superfamily member 21 (655 aa).

Positions 1–41 (MGTSASSITALASCSRIAGQVGATMVAGSLLLLGFLSTITA) are cleaved as a signal peptide. At 42–349 (QPEQKTLSLT…PHKHFDINEH (308 aa)) the chain is on the extracellular side. TNFR-Cys repeat units lie at residues 50–88 (LTGT…LRVC), 90–131 (SCPS…DREC), 133–167 (CPPG…EDVR), and 170–211 (QCAR…DNVC). 9 disulfide bridges follow: Cys67–Cys80, Cys70–Cys88, Cys91–Cys106, Cys109–Cys123, Cys113–Cys131, Cys133–Cys144, Cys150–Cys168, Cys171–Cys186, and Cys192–Cys211. Asn82 is a glycosylation site (N-linked (GlcNAc...) asparagine). 2 disordered regions span residues 214–306 (HLSS…GPHH) and 318–338 (EATG…HPRQ). The segment covering 216-225 (SSSSTTPSSP) has biased composition (low complexity). Polar residues-rich tracts occupy residues 241 to 262 (VPSS…TASV) and 276 to 302 (PDNT…THQQ). N-linked (GlcNAc...) asparagine glycans are attached at residues Asn252, Asn278, and Asn289. A helical transmembrane segment spans residues 350 to 370 (LPWMIVLFLLLVLVLIVVCSI). Residue Cys368 is the site of S-palmitoyl cysteine attachment. Residues 371 to 655 (RKSSRTLKKG…SVYSHLPDLL (285 aa)) are Cytoplasmic-facing. Positions 415 to 498 (GIDILKLVAA…DVVEKIRGLM (84 aa)) constitute a Death domain.

Associates with TRADD. Interacts with NGFR. Interacts with CASP8. Oxidized in response to reactive oxygen species (ROS), leading to endocytosis. In terms of tissue distribution, detected in brain (at protein level). Detected in corpus callosum oligodendrocytes. Detected in embryonic and adult brain.

Its subcellular location is the cell membrane. Its function is as follows. Promotes apoptosis, possibly via a pathway that involves the activation of NF-kappa-B. Can also promote apoptosis mediated by BAX and by the release of cytochrome c from the mitochondria into the cytoplasm. Trophic-factor deprivation triggers the cleavage of surface APP by beta-secretase to release sAPP-beta which is further cleaved to release an N-terminal fragment of APP (N-APP). Negatively regulates oligodendrocyte survival, maturation and myelination. Plays a role in signaling cascades triggered by stimulation of T-cell receptors, in the adaptive immune response and in the regulation of T-cell differentiation and proliferation. Negatively regulates T-cell responses and the release of cytokines such as IL4, IL5, IL10, IL13 and IFNG by Th2 cells. Negatively regulates the production of IgG, IgM and IgM in response to antigens. May inhibit the activation of JNK in response to T-cell stimulation. Also acts as a regulator of pyroptosis: recruits CASP8 in response to reactive oxygen species (ROS) and subsequent oxidation, leading to activation of GSDMC. The chain is Tumor necrosis factor receptor superfamily member 21 (Tnfrsf21) from Rattus norvegicus (Rat).